Consider the following 896-residue polypeptide: Bifunctional glutamine synthetase adenylyltransferase/adenylyl-removing enzyme (896 aa).

Residues 1–411 are adenylyl removase; the sequence is MSDNRLDTAR…LFNEILSEPE (411 aa). The tract at residues 417–896 is adenylyl transferase; it reads NSEWQWAWQE…EVFGEEAATA (480 aa).

The protein belongs to the GlnE family. Requires Mg(2+) as cofactor.

It catalyses the reaction [glutamine synthetase]-O(4)-(5'-adenylyl)-L-tyrosine + phosphate = [glutamine synthetase]-L-tyrosine + ADP. It carries out the reaction [glutamine synthetase]-L-tyrosine + ATP = [glutamine synthetase]-O(4)-(5'-adenylyl)-L-tyrosine + diphosphate. In terms of biological role, involved in the regulation of glutamine synthetase GlnA, a key enzyme in the process to assimilate ammonia. When cellular nitrogen levels are high, the C-terminal adenylyl transferase (AT) inactivates GlnA by covalent transfer of an adenylyl group from ATP to specific tyrosine residue of GlnA, thus reducing its activity. Conversely, when nitrogen levels are low, the N-terminal adenylyl removase (AR) activates GlnA by removing the adenylyl group by phosphorolysis, increasing its activity. The regulatory region of GlnE binds the signal transduction protein PII (GlnB) which indicates the nitrogen status of the cell. The chain is Bifunctional glutamine synthetase adenylyltransferase/adenylyl-removing enzyme from Neisseria meningitidis serogroup A / serotype 4A (strain DSM 15465 / Z2491).